Here is a 763-residue protein sequence, read N- to C-terminus: Phosphoglycerol transferase I (763 aa).

The next 4 membrane-spanning stretches (helical) occupy residues methionine 1 to alanine 21, tryptophan 26 to phenylalanine 46, isoleucine 77 to isoleucine 97, and phenylalanine 108 to phenylalanine 128.

Belongs to the OpgB family.

The protein resides in the cell inner membrane. It catalyses the reaction a phosphatidylglycerol + a membrane-derived-oligosaccharide D-glucose = a 1,2-diacyl-sn-glycerol + a membrane-derived-oligosaccharide 6-(glycerophospho)-D-glucose.. It participates in glycan metabolism; osmoregulated periplasmic glucan (OPG) biosynthesis. Its function is as follows. Transfers a phosphoglycerol residue from phosphatidylglycerol to the membrane-bound nascent glucan backbones. This chain is Phosphoglycerol transferase I, found in Shigella boydii serotype 18 (strain CDC 3083-94 / BS512).